A 685-amino-acid polypeptide reads, in one-letter code: ATP-dependent RNA helicase MSS116, mitochondrial (685 aa).

Residues 1 to 34 (MLVLQRIPKRALQFNGVTGTVCSTRLFHHAFNLN) constitute a mitochondrion transit peptide. The segment at 42–107 (SEERRYRNSN…NNGSRRRYQD (66 aa)) is disordered. Positions 58–69 (SDSNSNNKYRNS) are enriched in low complexity. Residues 70–86 (SYDDNRSRSNYGGDKRN) show a composition bias toward basic and acidic residues. Residues 88 to 99 (RNNNNYGNNRNN) show a composition bias toward low complexity. A Q motif motif is present at residues 138–166 (SLLEESLLDANVHKAISAMKFESLTPVQQ). The region spanning 170–357 (KPILTTENDV…ATIMNKKDCL (188 aa)) is the Helicase ATP-binding domain. Position 183–190 (183–190 (AKTGTGKT)) interacts with ATP. A DEAD box motif is present at residues 298–301 (DEAD). Residues 386–542 (SMVALIQSIE…EDYLNQDKEN (157 aa)) form the Helicase C-terminal domain. The segment at 633-685 (DREFDDEDRYTSRSQNNYKSKQSSKSNRFEGRNDYSNSRRSHANQKRNFTFDD) is disordered. Low complexity predominate over residues 644 to 658 (SRSQNNYKSKQSSKS).

It belongs to the DEAD box helicase family. DDX18/HAS1 subfamily.

The protein localises to the mitochondrion matrix. It catalyses the reaction ATP + H2O = ADP + phosphate + H(+). Functionally, ATP-dependent RNA helicase required for mitochondrial splicing of group I and II introns. Also required for efficient mitochondrial translation. The chain is ATP-dependent RNA helicase MSS116, mitochondrial (MSS116) from Kluyveromyces lactis (strain ATCC 8585 / CBS 2359 / DSM 70799 / NBRC 1267 / NRRL Y-1140 / WM37) (Yeast).